A 462-amino-acid chain; its full sequence is Argininosuccinate lyase (462 aa).

This sequence belongs to the lyase 1 family. Argininosuccinate lyase subfamily.

The protein resides in the cytoplasm. It catalyses the reaction 2-(N(omega)-L-arginino)succinate = fumarate + L-arginine. It functions in the pathway amino-acid biosynthesis; L-arginine biosynthesis; L-arginine from L-ornithine and carbamoyl phosphate: step 3/3. In Rippkaea orientalis (strain PCC 8801 / RF-1) (Cyanothece sp. (strain PCC 8801)), this protein is Argininosuccinate lyase.